A 374-amino-acid polypeptide reads, in one-letter code: 4-hydroxy-3-methylbut-2-en-1-yl diphosphate synthase (flavodoxin) (374 aa).

Positions 268, 271, 303, and 310 each coordinate [4Fe-4S] cluster.

The protein belongs to the IspG family. It depends on [4Fe-4S] cluster as a cofactor.

The catalysed reaction is (2E)-4-hydroxy-3-methylbut-2-enyl diphosphate + oxidized [flavodoxin] + H2O + 2 H(+) = 2-C-methyl-D-erythritol 2,4-cyclic diphosphate + reduced [flavodoxin]. The protein operates within isoprenoid biosynthesis; isopentenyl diphosphate biosynthesis via DXP pathway; isopentenyl diphosphate from 1-deoxy-D-xylulose 5-phosphate: step 5/6. In terms of biological role, converts 2C-methyl-D-erythritol 2,4-cyclodiphosphate (ME-2,4cPP) into 1-hydroxy-2-methyl-2-(E)-butenyl 4-diphosphate. In Geobacillus kaustophilus (strain HTA426), this protein is 4-hydroxy-3-methylbut-2-en-1-yl diphosphate synthase (flavodoxin).